Reading from the N-terminus, the 333-residue chain is Holliday junction branch migration complex subunit RuvB (333 aa).

Residues Met-1–Tyr-182 are large ATPase domain (RuvB-L). ATP contacts are provided by residues Leu-21, Arg-22, Gly-63, Lys-66, Thr-67, Thr-68, Glu-129–Phe-131, Arg-172, Tyr-182, and Arg-219. Thr-67 contacts Mg(2+). Residues Lys-183–His-253 form a small ATPAse domain (RuvB-S) region. The interval Pro-256–Gly-333 is head domain (RuvB-H). DNA contacts are provided by Arg-311 and Arg-316.

The protein belongs to the RuvB family. As to quaternary structure, homohexamer. Forms an RuvA(8)-RuvB(12)-Holliday junction (HJ) complex. HJ DNA is sandwiched between 2 RuvA tetramers; dsDNA enters through RuvA and exits via RuvB. An RuvB hexamer assembles on each DNA strand where it exits the tetramer. Each RuvB hexamer is contacted by two RuvA subunits (via domain III) on 2 adjacent RuvB subunits; this complex drives branch migration. In the full resolvosome a probable DNA-RuvA(4)-RuvB(12)-RuvC(2) complex forms which resolves the HJ.

The protein localises to the cytoplasm. It catalyses the reaction ATP + H2O = ADP + phosphate + H(+). Its function is as follows. The RuvA-RuvB-RuvC complex processes Holliday junction (HJ) DNA during genetic recombination and DNA repair, while the RuvA-RuvB complex plays an important role in the rescue of blocked DNA replication forks via replication fork reversal (RFR). RuvA specifically binds to HJ cruciform DNA, conferring on it an open structure. The RuvB hexamer acts as an ATP-dependent pump, pulling dsDNA into and through the RuvAB complex. RuvB forms 2 homohexamers on either side of HJ DNA bound by 1 or 2 RuvA tetramers; 4 subunits per hexamer contact DNA at a time. Coordinated motions by a converter formed by DNA-disengaged RuvB subunits stimulates ATP hydrolysis and nucleotide exchange. Immobilization of the converter enables RuvB to convert the ATP-contained energy into a lever motion, pulling 2 nucleotides of DNA out of the RuvA tetramer per ATP hydrolyzed, thus driving DNA branch migration. The RuvB motors rotate together with the DNA substrate, which together with the progressing nucleotide cycle form the mechanistic basis for DNA recombination by continuous HJ branch migration. Branch migration allows RuvC to scan DNA until it finds its consensus sequence, where it cleaves and resolves cruciform DNA. The polypeptide is Holliday junction branch migration complex subunit RuvB (Shouchella clausii (strain KSM-K16) (Alkalihalobacillus clausii)).